Consider the following 307-residue polypeptide: Methionyl-tRNA formyltransferase (307 aa).

Residue S108–P111 coordinates (6S)-5,6,7,8-tetrahydrofolate.

This sequence belongs to the Fmt family.

The enzyme catalyses L-methionyl-tRNA(fMet) + (6R)-10-formyltetrahydrofolate = N-formyl-L-methionyl-tRNA(fMet) + (6S)-5,6,7,8-tetrahydrofolate + H(+). Attaches a formyl group to the free amino group of methionyl-tRNA(fMet). The formyl group appears to play a dual role in the initiator identity of N-formylmethionyl-tRNA by promoting its recognition by IF2 and preventing the misappropriation of this tRNA by the elongation apparatus. The protein is Methionyl-tRNA formyltransferase of Xylella fastidiosa (strain 9a5c).